Consider the following 342-residue polypeptide: S-adenosylmethionine:tRNA ribosyltransferase-isomerase (342 aa).

This sequence belongs to the QueA family. In terms of assembly, monomer.

The protein localises to the cytoplasm. The catalysed reaction is 7-aminomethyl-7-carbaguanosine(34) in tRNA + S-adenosyl-L-methionine = epoxyqueuosine(34) in tRNA + adenine + L-methionine + 2 H(+). It participates in tRNA modification; tRNA-queuosine biosynthesis. In terms of biological role, transfers and isomerizes the ribose moiety from AdoMet to the 7-aminomethyl group of 7-deazaguanine (preQ1-tRNA) to give epoxyqueuosine (oQ-tRNA). The polypeptide is S-adenosylmethionine:tRNA ribosyltransferase-isomerase (Streptococcus pyogenes serotype M12 (strain MGAS2096)).